We begin with the raw amino-acid sequence, 224 residues long: Adenylate kinase (224 aa).

An ATP-binding site is contributed by 10 to 15 (GSGKST). Positions 30–59 (SSGDMIRAEIEKGSELGKELKKYLAKGELI) are NMP. AMP contacts are provided by residues S31, R36, 57–59 (ELI), 83–86 (GYPR), and Q90. An LID region spans residues 124–161 (GRRICPKCGAVYHLRYRPPKVPGKCDLCGSQLIQREDD). Residue R125 coordinates ATP. Zn(2+)-binding residues include C128 and C131. Residue 134–135 (VY) participates in ATP binding. Zn(2+) contacts are provided by C148 and C151. AMP is bound by residues R158 and R169. G197 provides a ligand contact to ATP.

Belongs to the adenylate kinase family. Monomer.

The protein resides in the cytoplasm. The enzyme catalyses AMP + ATP = 2 ADP. It participates in purine metabolism; AMP biosynthesis via salvage pathway; AMP from ADP: step 1/1. Catalyzes the reversible transfer of the terminal phosphate group between ATP and AMP. Plays an important role in cellular energy homeostasis and in adenine nucleotide metabolism. The sequence is that of Adenylate kinase from Thermococcus onnurineus (strain NA1).